A 562-amino-acid polypeptide reads, in one-letter code: Probable Xaa-Pro aminopeptidase PEPP (562 aa).

Residues aspartate 358, aspartate 369, glutamate 492, and glutamate 532 each contribute to the Mn(2+) site.

The protein belongs to the peptidase M24B family. Mn(2+) serves as cofactor.

It carries out the reaction Release of any N-terminal amino acid, including proline, that is linked to proline, even from a dipeptide or tripeptide.. In terms of biological role, catalyzes the removal of a penultimate prolyl residue from the N-termini of peptides. The chain is Probable Xaa-Pro aminopeptidase PEPP (PEPP) from Leptosphaeria maculans (strain JN3 / isolate v23.1.3 / race Av1-4-5-6-7-8) (Blackleg fungus).